The sequence spans 308 residues: Porphobilinogen deaminase (308 aa).

S-(dipyrrolylmethanemethyl)cysteine is present on Cys241.

Belongs to the HMBS family. As to quaternary structure, monomer. The cofactor is dipyrromethane.

The enzyme catalyses 4 porphobilinogen + H2O = hydroxymethylbilane + 4 NH4(+). Its pathway is porphyrin-containing compound metabolism; protoporphyrin-IX biosynthesis; coproporphyrinogen-III from 5-aminolevulinate: step 2/4. Its function is as follows. Tetrapolymerization of the monopyrrole PBG into the hydroxymethylbilane pre-uroporphyrinogen in several discrete steps. In Staphylococcus carnosus (strain TM300), this protein is Porphobilinogen deaminase.